Reading from the N-terminus, the 467-residue chain is Chromosomal replication initiator protein DnaA (467 aa).

A domain I, interacts with DnaA modulators region spans residues 1–80; that stretch reads MTSELWHQCL…APRISLKIGS (80 aa). The interval 80–130 is domain II; that stretch reads SITGNSKGQQASKDSAVGATRTTAPSRPVIADVAPSGERNVTVEGAIKHES. The interval 131–347 is domain III, AAA+ region; it reads YLNPTFTFET…GALKLVIANA (217 aa). The ATP site is built by Gly175, Gly177, Lys178, and Thr179. A domain IV, binds dsDNA region spans residues 348-467; that stretch reads HFTGQEITPA…YQNFMRMLTS (120 aa).

Belongs to the DnaA family. In terms of assembly, oligomerizes as a right-handed, spiral filament on DNA at oriC.

It is found in the cytoplasm. Functionally, plays an essential role in the initiation and regulation of chromosomal replication. ATP-DnaA binds to the origin of replication (oriC) to initiate formation of the DNA replication initiation complex once per cell cycle. Binds the DnaA box (a 9 base pair repeat at the origin) and separates the double-stranded (ds)DNA. Forms a right-handed helical filament on oriC DNA; dsDNA binds to the exterior of the filament while single-stranded (ss)DNA is stabiized in the filament's interior. The ATP-DnaA-oriC complex binds and stabilizes one strand of the AT-rich DNA unwinding element (DUE), permitting loading of DNA polymerase. After initiation quickly degrades to an ADP-DnaA complex that is not apt for DNA replication. Binds acidic phospholipids. The chain is Chromosomal replication initiator protein DnaA from Hahella chejuensis (strain KCTC 2396).